The primary structure comprises 447 residues: uncharacterized protein (447 aa).

Disordered regions lie at residues M1–S80, A115–P184, and L295–I322. A compositionally biased stretch (basic and acidic residues) spans Q11–S32. Residues K42–S51 show a composition bias toward polar residues. The span at V61–D72 shows a compositional bias: basic and acidic residues. A compositionally biased stretch (polar residues) spans A115–S158. Low complexity predominate over residues S300–G321. Transmembrane regions (helical) follow at residues F385 to L405 and I424 to G444.

It localises to the membrane. This is an uncharacterized protein from Schizosaccharomyces pombe (strain 972 / ATCC 24843) (Fission yeast).